Consider the following 202-residue polypeptide: Small ribosomal subunit protein uS4 (202 aa).

Positions 23 to 42 (RKAARRSYPPGQHGQARRKR) are disordered. The S4 RNA-binding domain occupies 90–154 (MRLDNLVFRL…SRKLVTANLE (65 aa)).

The protein belongs to the universal ribosomal protein uS4 family. As to quaternary structure, part of the 30S ribosomal subunit. Contacts protein S5. The interaction surface between S4 and S5 is involved in control of translational fidelity.

One of the primary rRNA binding proteins, it binds directly to 16S rRNA where it nucleates assembly of the body of the 30S subunit. Functionally, with S5 and S12 plays an important role in translational accuracy. The sequence is that of Small ribosomal subunit protein uS4 from Synechococcus elongatus (strain ATCC 33912 / PCC 7942 / FACHB-805) (Anacystis nidulans R2).